The following is a 67-amino-acid chain: Beta-defensin 1 (67 aa).

Residues 1–22 (MRIHYLLFAVLFLFLMPVPGEG) form the signal peptide. 3 disulfide bridges follow: cysteine 33/cysteine 62, cysteine 40/cysteine 55, and cysteine 45/cysteine 63.

As to quaternary structure, monomer. Homodimer. In terms of tissue distribution, highly expressed in tongue, nasopharyngeal mucosa and skin, and to a lower extent in the Eustachian tube, lung and trachea.

The protein resides in the secreted. It localises to the membrane. In terms of biological role, has antibacterial activity against Gram-positive bacterium S.pneumoniae Serotype 14. Is also active against Gram-negative bacteria M.catarrhalis 1857, and non-typeable H.influenzae strains 86-028NP and 1128. Has antifungal activity against C.albicans. May have a role in maintaining sterility in the middle ear. May act as a ligand for C-C chemokine receptor CCR6. Positively regulates the sperm motility and bactericidal activity in a CCR6-dependent manner. Binds to CCR6 and triggers Ca2+ mobilization in the sperm which is important for its motility. This is Beta-defensin 1 (DEFB1) from Chinchilla lanigera (Long-tailed chinchilla).